Here is a 425-residue protein sequence, read N- to C-terminus: 26S proteasome regulatory subunit 7 (425 aa).

208–215 (GPPGTGKT) lines the ATP pocket.

It belongs to the AAA ATPase family.

It is found in the cytoplasm. Its subcellular location is the nucleus. Its function is as follows. The 26S proteasome is involved in the ATP-dependent degradation of ubiquitinated proteins. The regulatory (or ATPase) complex confers ATP dependency and substrate specificity to the 26S complex. The polypeptide is 26S proteasome regulatory subunit 7 (RPT1) (Prunus persica (Peach)).